A 195-amino-acid polypeptide reads, in one-letter code: Early E3 22.2 kDa glycoprotein (195 aa).

6 N-linked (GlcNAc...) asparagine; by host glycosylation sites follow: Asn-20, Asn-61, Asn-76, Asn-88, Asn-126, and Asn-139.

This Canine adenovirus serotype 1 (strain Glaxo) (CAdV-1) protein is Early E3 22.2 kDa glycoprotein.